Reading from the N-terminus, the 289-residue chain is Iron-sulfur cluster carrier protein (289 aa).

Residues 1 to 18 (MAEECSGNCDSCGSSSDC) are compositionally biased toward low complexity. The tract at residues 1 to 20 (MAEECSGNCDSCGSSSDCSD) is disordered. 48 to 55 (GKGGVGKS) contributes to the ATP binding site.

It belongs to the Mrp/NBP35 ATP-binding proteins family. In terms of assembly, homodimer.

Binds and transfers iron-sulfur (Fe-S) clusters to target apoproteins. Can hydrolyze ATP. This is Iron-sulfur cluster carrier protein from Methanococcus maripaludis (strain DSM 14266 / JCM 13030 / NBRC 101832 / S2 / LL).